Here is an 878-residue protein sequence, read N- to C-terminus: Phosphoenolpyruvate carboxylase (878 aa).

Catalysis depends on residues His137 and Lys545.

This sequence belongs to the PEPCase type 1 family. The cofactor is Mg(2+).

The enzyme catalyses oxaloacetate + phosphate = phosphoenolpyruvate + hydrogencarbonate. Its function is as follows. Forms oxaloacetate, a four-carbon dicarboxylic acid source for the tricarboxylic acid cycle. The chain is Phosphoenolpyruvate carboxylase from Photorhabdus laumondii subsp. laumondii (strain DSM 15139 / CIP 105565 / TT01) (Photorhabdus luminescens subsp. laumondii).